A 320-amino-acid chain; its full sequence is uncharacterized protein (320 aa).

Residues 22 to 86 (KTIGRSSSFD…IRDLNNKTGT (65 aa)) form the FHA domain. The disordered stretch occupies residues 242–264 (TDTDTTEEKEEEEEKEEGDDEEG).

This is an uncharacterized protein from Saccharomyces cerevisiae (strain ATCC 204508 / S288c) (Baker's yeast).